The primary structure comprises 200 residues: Probable GTP-binding protein EngB (200 aa).

In terms of domain architecture, EngB-type G spans 26–200 (SIPEIAIAGR…IYEIAQCIKK (175 aa)). GTP-binding positions include 34–41 (GRSNVGKS), 61–65 (GCTKQ), 80–83 (DLPG), 147–150 (TKID), and 176–179 (VISA). Mg(2+)-binding residues include serine 41 and threonine 63.

This sequence belongs to the TRAFAC class TrmE-Era-EngA-EngB-Septin-like GTPase superfamily. EngB GTPase family. The cofactor is Mg(2+).

Its function is as follows. Necessary for normal cell division and for the maintenance of normal septation. The chain is Probable GTP-binding protein EngB from Ehrlichia canis (strain Jake).